A 295-amino-acid chain; its full sequence is Bifunctional protein FolD (295 aa).

Residues 165-167 (GRG), S192, and I233 contribute to the NADP(+) site.

This sequence belongs to the tetrahydrofolate dehydrogenase/cyclohydrolase family. Homodimer.

It catalyses the reaction (6R)-5,10-methylene-5,6,7,8-tetrahydrofolate + NADP(+) = (6R)-5,10-methenyltetrahydrofolate + NADPH. The enzyme catalyses (6R)-5,10-methenyltetrahydrofolate + H2O = (6R)-10-formyltetrahydrofolate + H(+). It functions in the pathway one-carbon metabolism; tetrahydrofolate interconversion. Functionally, catalyzes the oxidation of 5,10-methylenetetrahydrofolate to 5,10-methenyltetrahydrofolate and then the hydrolysis of 5,10-methenyltetrahydrofolate to 10-formyltetrahydrofolate. The sequence is that of Bifunctional protein FolD from Tropheryma whipplei (strain Twist) (Whipple's bacillus).